Reading from the N-terminus, the 159-residue chain is Large ribosomal subunit protein uL11 (159 aa).

The protein belongs to the universal ribosomal protein uL11 family. Part of the ribosomal stalk of the 50S ribosomal subunit. Interacts with L10 and the large rRNA to form the base of the stalk. L10 forms an elongated spine to which L12 dimers bind in a sequential fashion forming a multimeric L10(L12)X complex.

In terms of biological role, forms part of the ribosomal stalk which helps the ribosome interact with GTP-bound translation factors. This is Large ribosomal subunit protein uL11 from Nitrosopumilus maritimus (strain SCM1).